A 401-amino-acid polypeptide reads, in one-letter code: ATP phosphoribosyltransferase regulatory subunit (401 aa).

It belongs to the class-II aminoacyl-tRNA synthetase family. HisZ subfamily. In terms of assembly, heteromultimer composed of HisG and HisZ subunits.

The protein resides in the cytoplasm. Its pathway is amino-acid biosynthesis; L-histidine biosynthesis; L-histidine from 5-phospho-alpha-D-ribose 1-diphosphate: step 1/9. Functionally, required for the first step of histidine biosynthesis. May allow the feedback regulation of ATP phosphoribosyltransferase activity by histidine. The protein is ATP phosphoribosyltransferase regulatory subunit of Cyanothece sp. (strain PCC 7425 / ATCC 29141).